The primary structure comprises 147 residues: Hemoglobin subunit beta (147 aa).

Residue Val2 is modified to N-acetylvaline. Positions 3-147 constitute a Globin domain; it reads HLTGEEKSAV…VANALAHKYH (145 aa). Position 13 is a phosphothreonine (Thr13). Phosphoserine is present on Ser45. N6-acetyllysine is present on Lys60. Position 64 (His64) interacts with heme b. Lys83 is modified (N6-acetyllysine). Residue His93 coordinates heme b. Cys94 is subject to S-nitrosocysteine. The residue at position 145 (Lys145) is an N6-acetyllysine.

It belongs to the globin family. As to quaternary structure, heterotetramer of two alpha chains and two beta chains. In terms of tissue distribution, red blood cells.

Functionally, involved in oxygen transport from the lung to the various peripheral tissues. The sequence is that of Hemoglobin subunit beta (HBB) from Callimico goeldii (Goeldi's marmoset).